We begin with the raw amino-acid sequence, 92 residues long: Alpha-conotoxin-like Rt20.1 (92 aa).

The signal sequence occupies residues 1–24; it reads MPKLEMMLLVLLILPLSYFSAAGG. Residues 25–45 constitute a propeptide that is removed on maturation; that stretch reads QVVQGDLRSDVLARYLQRGDR. Residue E49 is modified to 4-carboxyglutamate. P55 is modified (4-hydroxyproline). 4 cysteine pairs are disulfide-bonded: C63–C72, C68–C80, C73–C90, and C78–C92.

It belongs to the conotoxin D superfamily. Hetero-, homo- or pseudo-homodimer (identical sequence, different post-translational modifications). As to expression, expressed by the venom duct.

The protein resides in the secreted. Functionally, alpha-conotoxins act on postsynaptic membranes, they bind to the nicotinic acetylcholine receptors (nAChR) and thus inhibit them. Through its two C-terminal domains, this homodimeric protein would bind to two nAChR allosteric sites, located outside the nAChR C-loop of the principal binding face and at the adjacent binding interface in a clockwise direction. This toxin specifically blocks mammalian neuronal nAChR of the alpha-7/CHRNA7, alpha-3-beta-2/CHRNA3-CHRNB2 and alpha-4-beta-2/CHRNA4-CHRNB2 subtypes. In Conus rattus (Rat cone), this protein is Alpha-conotoxin-like Rt20.1.